The following is a 1035-amino-acid chain: MSEIPTRFEHAEEADKIAQAWTDAKCSHADPESSKPPFSVVIPPPNVTGALHLGHGLNNTLQDIVVRRKRMQGFETLWMPGTDHAGIATQAVVERRLKEQEDKTRHDLGREALVDRIWQWKDQYEERIIGQLKRMGTSCDWERLRFTLDPICAAAVRATFFDLFGKRRIYRGKRLVNWDTFLQTAVSDDEVFNETKKGHFYHFRYPVIDPKPGEPEFVTIATTRPETMLGDTAVAVHPDPAAALDAVEAGLREKLSDANEKEAVDLNKQIEALQKRREERLPELIQLRDMAADGRKLMLPLVDREIDLVADEWAKPEMGSGCVKITPAHDPNDYEVGIRQDLPMINILNSDGTLNGEGGQFAGLTIPKARKAVVAALEELGLMGDIEDREIELPHSDRSKTPIEPYLADQWFVAMDELAQSAMDAVSDERVQIFPARYRKGYLDWLSEKRDWPVSRQLWWGHRIPIWSVGGLSQQEANELSSELEKLAERHPDQIAQRIDSDGVDAAGEPTKAVFVCIRSEDETVEADVEALGLQQDPDVLDTWFSSALWPHSTLGWPAQTPELAKFYPTATLITSRDILTLWVARMVLMGLNNVGEVPFSEVFIHPKILDGLGETMSKSKGNGVDPIDVIDKFGPDALRFGLARLATETQDVRMPVQYECPSCEKLIDQTKKNRALPSMDCPACGKPFSTQWAETEADKSLPKAAVVSERFETARNFVNKLWNASRFVMMNLDGFEPTSLDVASLPIEDRWLLSRLSTVTQTVGDAIERYQFGEAARVLYDFAWDEFCSFYVEIAKPRLSDDSQRQIAQNVIAHGLDQLLRLLHPIMPFVTESVWNHLGQIAPKRGVPEPAEVGPFVMTASFPVADESHHDSKIERQFSEFQQIVAAIRQIRASQNIAPKETVPAAIRCSASSQELLQPMTAYFEALAGAEVQSLGPDTTAFETDAHLALPDVDVDVHVDLEKFIDVEAELARLEKLQGQLTGQITGKQNKLSNESFVSRAPADIVQKERESLAGLQTQLEAVAQDILKLQSKK.

Residues 45–55 (PNVTGALHLGH) carry the 'HIGH' region motif. Positions 253–281 (EKLSDANEKEAVDLNKQIEALQKRREERL) form a coiled coil. ATP is bound at residue Lys619. Positions 967–1035 (DVEAELARLE…QDILKLQSKK (69 aa)) form a coiled coil.

The protein belongs to the class-I aminoacyl-tRNA synthetase family. ValS type 1 subfamily. As to quaternary structure, monomer.

It is found in the cytoplasm. It carries out the reaction tRNA(Val) + L-valine + ATP = L-valyl-tRNA(Val) + AMP + diphosphate. Its function is as follows. Catalyzes the attachment of valine to tRNA(Val). As ValRS can inadvertently accommodate and process structurally similar amino acids such as threonine, to avoid such errors, it has a 'posttransfer' editing activity that hydrolyzes mischarged Thr-tRNA(Val) in a tRNA-dependent manner. In Rhodopirellula baltica (strain DSM 10527 / NCIMB 13988 / SH1), this protein is Valine--tRNA ligase.